Reading from the N-terminus, the 306-residue chain is Probable cobalamin biosynthesis protein CobD (306 aa).

Helical transmembrane passes span 17-37, 54-74, 88-108, 155-175, 207-227, and 286-306; these read IGEP…IIFF, LFGF…AYEI, ISLY…IEFS, ITDS…PGAF, ILNF…APFY, and SLKA…VLLM.

This sequence belongs to the CobD/CbiB family.

The protein localises to the cell membrane. Its pathway is cofactor biosynthesis; adenosylcobalamin biosynthesis. In terms of biological role, converts cobyric acid to cobinamide by the addition of aminopropanol on the F carboxylic group. The sequence is that of Probable cobalamin biosynthesis protein CobD from Methanococcus maripaludis (strain C5 / ATCC BAA-1333).